The following is a 2179-amino-acid chain: Probable inactive serine/threonine-protein kinase lvsG (2179 aa).

A disordered region spans residues 100–167 (DHDLNKNKNN…TSISLNDLNS (68 aa)). 2 stretches are compositionally biased toward low complexity: residues 106-121 (NKNN…NNSG) and 141-159 (LSPS…LSTS). The WD 1 repeat unit spans residues 216–256 (LYERSLKTSQQQQQQQQQQFKFQPNETLSLWEYFDEINSPP). Disordered stretches follow at residues 281 to 300 (LDNK…NSQS), 523 to 556 (DNDN…TVGW), 589 to 621 (DSMG…NSGK), 778 to 801 (KSLK…QPQF), 844 to 959 (NNHH…NKPS), 1033 to 1055 (AQQQ…SKQL), 1079 to 1153 (GISK…STTD), 1339 to 1362 (NHSN…KNGS), and 1785 to 1807 (TTTT…PNSL). Residues 463-801 (YHQPLENQFE…QQQTQQQPQF (339 aa)) enclose the BEACH domain. Positions 534–548 (NSSSSNNNNNNNNED) are enriched in low complexity. The span at 590–602 (SMGGGIGSIGSTG) shows a compositional bias: gly residues. Low complexity-rich tracts occupy residues 783–800 (QRQQ…QQPQ), 853–943 (NSNI…GVNN), 1033–1047 (AQQQ…QQQA), and 1084–1098 (TTNA…TNSN). Residues 1021 to 1049 (LQQQLQQQQQQQAQQQQSQQQSQQQQANS) are a coiled coil. One can recognise a Protein kinase domain in the interval 1064 to 1400 (ESMIKKYSNG…VNELLSSSLF (337 aa)). Residues 1099-1122 (MGDSIGNNITSPPSPTSLKDSSSI) show a composition bias toward polar residues. The segment covering 1123–1134 (QQQQQQQQQQQQ) has biased composition (low complexity). A compositionally biased stretch (polar residues) spans 1135-1153 (NSESTRPITPPNVSNSTTD). 2 stretches are compositionally biased toward low complexity: residues 1339–1360 (NHSN…NNKN) and 1785–1801 (TTTT…NNNN). 6 WD repeats span residues 1864–1903 (EHNA…SLTT), 1906–1942 (QHMH…KVNV), 1945–1983 (EPTG…LTHE), 2007–2048 (SNSN…ILEQ), 2052–2089 (HHDS…PIIS), and 2149–2179 (PKQS…KICQ).

This sequence belongs to the protein kinase superfamily. Ser/Thr protein kinase family.

The polypeptide is Probable inactive serine/threonine-protein kinase lvsG (lvsG) (Dictyostelium discoideum (Social amoeba)).